The following is a 1063-amino-acid chain: Exportin-1 (1063 aa).

Residues Ala-43–Lys-109 form the Importin N-terminal domain. The segment at Ala-1034–Glu-1063 is disordered.

It belongs to the exportin family. In terms of assembly, interacts with Clbn (via its N-terminus). Associates with the nuclear pore complex via interaction with mbo and Nup214. Interacts with target proteins containing NES sequences such as actin and dl. As to expression, high expression observed in the developing embryonic brain, hind gut and posterior spiracles shortly before dorsal closure; and in the ventral nerve cord, midgut and somatic musculature shortly after dorsal closure. Expression increases when the tissue is well developed.

The protein localises to the nucleus. Its subcellular location is the nucleus membrane. In terms of biological role, receptor for the leucine-rich nuclear export signal (NES). Binds cooperatively to the NES on its target protein and to the small GTPase Ran in its active GTP-bound form. Involved in the export of dl, RpS2 and the pre-40S ribosome from the nucleus to the cytoplasm. Plays an important role in nuclear pore assembly by mediating nucleoporin condensation and biogenesis of annulate lamellae. Required for the function or maintenance of certain tissues such as brain and gut. The sequence is that of Exportin-1 from Drosophila melanogaster (Fruit fly).